Here is a 93-residue protein sequence, read N- to C-terminus: Cell division protein FtsB (93 aa).

At 1–3 the chain is on the cytoplasmic side; the sequence is MRV. Residues 4–21 traverse the membrane as a helical segment; sequence TLVVLLALFLALQYRLWF. The Periplasmic segment spans residues 22–93; sequence GKNSLPDYWR…FFRLVPDRNP (72 aa). A coiled-coil region spans residues 28 to 75; that stretch reads DYWRLQQEVSNQKNTNENLERRNQLIYADIEDLREGEDALEERARNEL.

It belongs to the FtsB family. As to quaternary structure, part of a complex composed of FtsB, FtsL and FtsQ.

The protein localises to the cell inner membrane. In terms of biological role, essential cell division protein. May link together the upstream cell division proteins, which are predominantly cytoplasmic, with the downstream cell division proteins, which are predominantly periplasmic. The polypeptide is Cell division protein FtsB (Idiomarina loihiensis (strain ATCC BAA-735 / DSM 15497 / L2-TR)).